A 96-amino-acid chain; its full sequence is ATP-dependent Clp protease adapter protein ClpS (96 aa).

The protein belongs to the ClpS family. Binds to the N-terminal domain of the chaperone ClpA.

Functionally, involved in the modulation of the specificity of the ClpAP-mediated ATP-dependent protein degradation. In Campylobacter jejuni subsp. jejuni serotype O:6 (strain 81116 / NCTC 11828), this protein is ATP-dependent Clp protease adapter protein ClpS.